The sequence spans 518 residues: Suppressor of hairless homolog (518 aa).

Positions 22 to 59 are disordered; it reads ETDQQRSHVKERVNGTPNQNGGTSTSSKPRSVFENRPP. The span at 24–34 shows a compositional bias: basic and acidic residues; it reads DQQRSHVKERV. The segment covering 36-50 has biased composition (polar residues); the sequence is GTPNQNGGTSTSSKP. 3 DNA-binding regions span residues 89 to 96, 223 to 232, and 296 to 328; these read KSYGNEKR, RLRSQTVSTR, and RKVDKQTAILNADDPVSQLHKCAFYLKDSERMY. Residues 386-476 form the IPT/TIG domain; that stretch reads PVVHSLQLNG…YPTNLTFTFT (91 aa).

It belongs to the Su(H) family. As to quaternary structure, interacts with activated Notch proteins.

It localises to the nucleus. Transcriptional regulator that plays a central role in Notch signaling, a signaling pathway involved in cell-cell communication that regulates a broad spectrum of cell-fate determinations. Acts as a transcriptional repressor when it is not associated with Notch proteins. When associated with some Notch protein, it acts as a transcriptional activator that activates transcription of Notch target genes. The chain is Suppressor of hairless homolog (RBP-JK) from Halocynthia roretzi (Sea squirt).